A 444-amino-acid chain; its full sequence is N-succinylarginine dihydrolase (444 aa).

Substrate-binding positions include 19 to 28, Asn-110, and 137 to 138; these read AGLSFGNVAS and HR. Glu-174 is an active-site residue. Substrate is bound at residue Arg-214. Residue His-250 is part of the active site. Substrate-binding residues include Asp-252 and Asn-362. Cys-368 (nucleophile) is an active-site residue.

The protein belongs to the succinylarginine dihydrolase family. In terms of assembly, homodimer.

It catalyses the reaction N(2)-succinyl-L-arginine + 2 H2O + 2 H(+) = N(2)-succinyl-L-ornithine + 2 NH4(+) + CO2. It functions in the pathway amino-acid degradation; L-arginine degradation via AST pathway; L-glutamate and succinate from L-arginine: step 2/5. Catalyzes the hydrolysis of N(2)-succinylarginine into N(2)-succinylornithine, ammonia and CO(2). The sequence is that of N-succinylarginine dihydrolase from Shewanella denitrificans (strain OS217 / ATCC BAA-1090 / DSM 15013).